A 474-amino-acid polypeptide reads, in one-letter code: Aspartyl/glutamyl-tRNA(Asn/Gln) amidotransferase subunit B (474 aa).

Belongs to the GatB/GatE family. GatB subfamily. As to quaternary structure, heterotrimer of A, B and C subunits.

It catalyses the reaction L-glutamyl-tRNA(Gln) + L-glutamine + ATP + H2O = L-glutaminyl-tRNA(Gln) + L-glutamate + ADP + phosphate + H(+). The catalysed reaction is L-aspartyl-tRNA(Asn) + L-glutamine + ATP + H2O = L-asparaginyl-tRNA(Asn) + L-glutamate + ADP + phosphate + 2 H(+). Allows the formation of correctly charged Asn-tRNA(Asn) or Gln-tRNA(Gln) through the transamidation of misacylated Asp-tRNA(Asn) or Glu-tRNA(Gln) in organisms which lack either or both of asparaginyl-tRNA or glutaminyl-tRNA synthetases. The reaction takes place in the presence of glutamine and ATP through an activated phospho-Asp-tRNA(Asn) or phospho-Glu-tRNA(Gln). This chain is Aspartyl/glutamyl-tRNA(Asn/Gln) amidotransferase subunit B, found in Methanospirillum hungatei JF-1 (strain ATCC 27890 / DSM 864 / NBRC 100397 / JF-1).